Consider the following 418-residue polypeptide: Nucleoredoxin (418 aa).

Residues 109–309 enclose the Thioredoxin domain; that stretch reads KYKVTSIPSL…ESNAVQLHEG (201 aa).

The protein belongs to the nucleoredoxin family.

It localises to the cytoplasm. It is found in the cytosol. The protein resides in the nucleus. The enzyme catalyses [protein]-dithiol + NAD(+) = [protein]-disulfide + NADH + H(+). It catalyses the reaction [protein]-dithiol + NADP(+) = [protein]-disulfide + NADPH + H(+). Its function is as follows. Functions as a redox-dependent negative regulator of the Wnt signaling pathway. This is Nucleoredoxin (nxn) from Danio rerio (Zebrafish).